We begin with the raw amino-acid sequence, 147 residues long: Histone-lysine N-methyltransferase, H3 lysine-37 specific (147 aa).

An SET domain is found at 8-116 (SPLEIRDTER…TNEELCISYG (109 aa)).

The protein belongs to the class V-like SAM-binding methyltransferase superfamily. As to quaternary structure, homodimer.

It localises to the cytoplasm. Its subcellular location is the nucleus. The enzyme catalyses L-lysyl(37)-[histone H3] + S-adenosyl-L-methionine = N(6)-methyl-L-lysyl(37)-[histone H3] + S-adenosyl-L-homocysteine + H(+). It catalyses the reaction N(6)-methyl-L-lysyl(37)-[histone H3] + S-adenosyl-L-methionine = N(6),N(6)-dimethyl-L-lysyl(37)-[histone H3] + S-adenosyl-L-homocysteine + H(+). The catalysed reaction is N(6),N(6)-dimethyl-L-lysyl(37)-[histone H3] + S-adenosyl-L-methionine = N(6),N(6),N(6)-trimethyl-L-lysyl(37)-[histone H3] + S-adenosyl-L-homocysteine + H(+). Functionally, histone lysine methyltransferase that specifically mono-, di-, and trimethylates 'Lys-37' of histone H3 to regulate sporulation. The protein is Histone-lysine N-methyltransferase, H3 lysine-37 specific of Schizosaccharomyces pombe (strain 972 / ATCC 24843) (Fission yeast).